The following is a 195-amino-acid chain: Phosphoribosylglycinamide formyltransferase (195 aa).

Position 12–14 (12–14 (GSN)) interacts with N(1)-(5-phospho-beta-D-ribosyl)glycinamide. (6R)-10-formyltetrahydrofolate contacts are provided by residues Lys-65, 90-93 (MRLI), and Asn-107. The active-site Proton donor is the His-109.

This sequence belongs to the GART family.

The enzyme catalyses N(1)-(5-phospho-beta-D-ribosyl)glycinamide + (6R)-10-formyltetrahydrofolate = N(2)-formyl-N(1)-(5-phospho-beta-D-ribosyl)glycinamide + (6S)-5,6,7,8-tetrahydrofolate + H(+). It participates in purine metabolism; IMP biosynthesis via de novo pathway; N(2)-formyl-N(1)-(5-phospho-D-ribosyl)glycinamide from N(1)-(5-phospho-D-ribosyl)glycinamide (10-formyl THF route): step 1/1. In terms of biological role, catalyzes the transfer of a formyl group from 10-formyltetrahydrofolate to 5-phospho-ribosyl-glycinamide (GAR), producing 5-phospho-ribosyl-N-formylglycinamide (FGAR) and tetrahydrofolate. The polypeptide is Phosphoribosylglycinamide formyltransferase (Bacillus subtilis (strain 168)).